Here is a 719-residue protein sequence, read N- to C-terminus: 1,4-alpha-glucan branching enzyme GlgB (719 aa).

Aspartate 400 (nucleophile) is an active-site residue. Glutamate 453 serves as the catalytic Proton donor.

The protein belongs to the glycosyl hydrolase 13 family. GlgB subfamily. In terms of assembly, monomer.

It catalyses the reaction Transfers a segment of a (1-&gt;4)-alpha-D-glucan chain to a primary hydroxy group in a similar glucan chain.. It participates in glycan biosynthesis; glycogen biosynthesis. Catalyzes the formation of the alpha-1,6-glucosidic linkages in glycogen by scission of a 1,4-alpha-linked oligosaccharide from growing alpha-1,4-glucan chains and the subsequent attachment of the oligosaccharide to the alpha-1,6 position. The chain is 1,4-alpha-glucan branching enzyme GlgB from Chlamydia caviae (strain ATCC VR-813 / DSM 19441 / 03DC25 / GPIC) (Chlamydophila caviae).